The primary structure comprises 417 residues: Probable glucuronosyltransferase GUT1 (417 aa).

The Cytoplasmic segment spans residues 1-15; it reads MGTRRRSARARARPP. The chain crosses the membrane as a helical; Signal-anchor for type II membrane protein span at residues 16 to 36; the sequence is LAMPLAVLLLFACSSGVAAAA. The Lumenal portion of the chain corresponds to 37–417; the sequence is AQGIERIKDD…EGTREDLKPW (381 aa). Residues asparagine 144 and asparagine 405 are each glycosylated (N-linked (GlcNAc...) asparagine).

This sequence belongs to the glycosyltransferase 47 family.

The protein localises to the golgi apparatus membrane. Its function is as follows. Involved in the synthesis of glucuronoxylan hemicellulose in secondary cell walls. The polypeptide is Probable glucuronosyltransferase GUT1 (GUT1) (Oryza sativa subsp. japonica (Rice)).